The following is a 335-amino-acid chain: UPF0284 protein TON_0688 (335 aa).

This sequence belongs to the UPF0284 family.

The sequence is that of UPF0284 protein TON_0688 from Thermococcus onnurineus (strain NA1).